We begin with the raw amino-acid sequence, 229 residues long: Adenylate kinase 1 (229 aa).

Residue 42–47 participates in ATP binding; sequence GCGKGT. A Phosphoserine modification is found at serine 62. AMP is bound by residues serine 63, arginine 68, 118–121, and glutamine 125; that span reads GYPR. An ATP-binding site is contributed by arginine 156. The AMP site is built by arginine 164 and arginine 175.

This sequence belongs to the adenylate kinase family. AK1 subfamily. As to expression, high expression levels in the thorax, suggesting a possible function in the gastrointestinal or reproductive systems.

The protein resides in the cytoplasm. The catalysed reaction is AMP + ATP = 2 ADP. In terms of biological role, catalyzes the reversible transfer of the terminal phosphate group between ATP and AMP. Plays an important role in cellular energy homeostasis and in adenine nucleotide metabolism. The polypeptide is Adenylate kinase 1 (Drosophila melanogaster (Fruit fly)).